The primary structure comprises 171 residues: Ribosome maturation factor RimP (171 aa).

The protein belongs to the RimP family.

The protein resides in the cytoplasm. Its function is as follows. Required for maturation of 30S ribosomal subunits. This Oleidesulfovibrio alaskensis (strain ATCC BAA-1058 / DSM 17464 / G20) (Desulfovibrio alaskensis) protein is Ribosome maturation factor RimP.